The sequence spans 599 residues: MRIDQSIINEIKDKTDILDLVSEYVKLEKRGRNYIGLCPFHDEKTPSFTVSEDKQICHCFGCKKGGNVFQFTQEIKDISFVEAVKELGDRVNVAVDIEATQSNSNVQIASDDLQMIEMHELIQEFYYYALTKTVEGEQALTYLQERGFTDALIKERGIGFAPDSSHFCHDFLQKKGYDIELAYEAGLLSRNEENFSYYDRFRNRIMFPLKNAQGRIVGYSGRTYTGQEPKYLNSPETPIFQKRKLLYNLDKARKSIRKLDEIVLLEGFMDVIKSDTAGLKNVVATMGTQLSDEHITFIRKLTSNITLMFDGDFAGSEATLKTGQNLLQQGLNVFVIQLPSGMDPDEYIGKYGNDAFTAFVKNDKKSFAHYKVSILKDEIAHNDLSYERYLKELSHDISLMKSSILQQKALNDVAPFFNVSPEQLANEIQFNQAPANYYPEDEYGGYIEPEPIGMAQFDNLSRQEKAERAFLKHLMRDKDTFLNYYESVDKDNFTNQHFKYVFEVLHDFYAENDQYNISDAVQYVNSNELRETLISLEQYNLNDEPYENEIDDYVNVINEKGQETIESLNHKLREATRIGDVELQKYYLQQIVAKNKERM.

Residues 38 to 62 (CPFHDEKTPSFTVSEDKQICHCFGC) form a CHC2-type zinc finger. The region spanning 260 to 341 (DEIVLLEGFM…NVFVIQLPSG (82 aa)) is the Toprim domain. Residues Glu-266, Asp-310, and Asp-312 each contribute to the Mg(2+) site.

This sequence belongs to the DnaG primase family. Monomer. Interacts with DnaB. Zn(2+) serves as cofactor. Requires Mg(2+) as cofactor.

The catalysed reaction is ssDNA + n NTP = ssDNA/pppN(pN)n-1 hybrid + (n-1) diphosphate.. Its function is as follows. RNA polymerase that catalyzes the synthesis of short RNA molecules used as primers for DNA polymerase during DNA replication. This is DNA primase from Staphylococcus aureus (strain COL).